A 112-amino-acid polypeptide reads, in one-letter code: DNA-binding protein TON_1102 (112 aa).

The protein belongs to the PDCD5 family.

This is DNA-binding protein TON_1102 from Thermococcus onnurineus (strain NA1).